The primary structure comprises 1053 residues: Probable dihydropyrimidine dehydrogenase [NADP(+)] (1053 aa).

The 32-residue stretch at 84–115 (ERGALKEAMRCLKCADAPCQKSCPTQLDIKSF) folds into the 4Fe-4S ferredoxin-type 1 domain. Residues Cys-94, Cys-97, Cys-102, Cys-106, Cys-145, Cys-151, Cys-155, and Gln-171 each coordinate [4Fe-4S] cluster. FAD is bound by residues 207 to 211 (GCGPA), 231 to 239 (EKRAYIGGL), Arg-248, and Leu-274. Residues 354–357 (AGDT), 378–379 (RK), Arg-385, 451–453 (AFG), and 495–501 (DVAGVAE) contribute to the NADP(+) site. Residue 494–503 (GDVAGVAETT) coordinates FAD. FMN-binding positions include Ser-574 and 598–599 (KT). Substrate-binding positions include Asn-633 and 692–694 (NLS). Residue Cys-695 is the Proton acceptor of the active site. Residue Lys-733 participates in FMN binding. 760 to 761 (NT) serves as a coordination point for substrate. Residues Gly-791, 817-819 (TGG), and 840-841 (CS) each bind FMN. 2 4Fe-4S ferredoxin-type domains span residues 949 to 981 (EVAI…FDAV) and 983 to 1013 (HQPH…MVPR). Residues Cys-958, Cys-961, Cys-964, Cys-968, Cys-992, Cys-995, Cys-998, and Cys-1002 each coordinate [4Fe-4S] cluster.

It belongs to the dihydropyrimidine dehydrogenase family. It depends on [4Fe-4S] cluster as a cofactor. FAD is required as a cofactor. FMN serves as cofactor.

The catalysed reaction is 5,6-dihydrouracil + NADP(+) = uracil + NADPH + H(+). The protein operates within amino-acid biosynthesis; beta-alanine biosynthesis. Involved in pyrimidine base degradation. Catalyzes the reduction of uracil and thymine. Also involved the degradation of the chemotherapeutic drug 5-fluorouracil. The chain is Probable dihydropyrimidine dehydrogenase [NADP(+)] from Caenorhabditis briggsae.